The following is a 574-amino-acid chain: Septation ring formation regulator EzrA (574 aa).

Topologically, residues 1-7 are extracellular; sequence MSSGIIL. A helical membrane pass occupies residues 8–26; the sequence is LIVAIVLLVIIAYLVGVII. Over 27–574 the chain is Cytoplasmic; that stretch reads RKRNDSLITS…YEKTREHIRF (548 aa). 3 coiled-coil regions span residues 102-141, 274-350, and 459-520; these read NFIR…EEKN, ELVT…ETES, and QLEA…SFEA.

It belongs to the EzrA family.

The protein resides in the cell membrane. Negative regulator of FtsZ ring formation; modulates the frequency and position of FtsZ ring formation. Inhibits FtsZ ring formation at polar sites. Interacts either with FtsZ or with one of its binding partners to promote depolymerization. The chain is Septation ring formation regulator EzrA from Streptococcus pyogenes serotype M4 (strain MGAS10750).